The chain runs to 193 residues: uncharacterized protein (193 aa).

The tract at residues 1 to 144 (MEKKRTLSVN…NNNNNNEGTI (144 aa)) is disordered. A compositionally biased stretch (low complexity) spans 29 to 86 (NSLNNIENNECNNNNNNNNNNNNNNSNSNNLNNSNNNNINTSSNSINSSNSINNSIDN). Polar residues predominate over residues 103–118 (KMNSSQEFQSYLTPNK). The segment covering 119-140 (NNNNRNNNNRNNNNNNNNNNNN) has biased composition (low complexity). A helical membrane pass occupies residues 158-180 (YMIRPFLVGASASFGISIGMFYF).

It is found in the membrane. This is an uncharacterized protein from Dictyostelium discoideum (Social amoeba).